A 357-amino-acid polypeptide reads, in one-letter code: Holliday junction branch migration complex subunit RuvB (357 aa).

The large ATPase domain (RuvB-L) stretch occupies residues 4 to 195 (TDKLAAKAVS…FGIVARLEFY (192 aa)). ATP-binding positions include L34, R35, G76, K79, T80, T81, 142–144 (EDY), R185, Y195, and R232. Mg(2+) is bound at residue T80. Residues 196–266 (TPTELARIVT…VADAALAMLD (71 aa)) are small ATPAse domain (RuvB-S). The head domain (RuvB-H) stretch occupies residues 269 to 357 (AVGFDLMDRK…PARDLWDNNA (89 aa)). R305, R324, and R329 together coordinate DNA.

This sequence belongs to the RuvB family. Homohexamer. Forms an RuvA(8)-RuvB(12)-Holliday junction (HJ) complex. HJ DNA is sandwiched between 2 RuvA tetramers; dsDNA enters through RuvA and exits via RuvB. An RuvB hexamer assembles on each DNA strand where it exits the tetramer. Each RuvB hexamer is contacted by two RuvA subunits (via domain III) on 2 adjacent RuvB subunits; this complex drives branch migration. In the full resolvosome a probable DNA-RuvA(4)-RuvB(12)-RuvC(2) complex forms which resolves the HJ.

The protein resides in the cytoplasm. The enzyme catalyses ATP + H2O = ADP + phosphate + H(+). Its function is as follows. The RuvA-RuvB-RuvC complex processes Holliday junction (HJ) DNA during genetic recombination and DNA repair, while the RuvA-RuvB complex plays an important role in the rescue of blocked DNA replication forks via replication fork reversal (RFR). RuvA specifically binds to HJ cruciform DNA, conferring on it an open structure. The RuvB hexamer acts as an ATP-dependent pump, pulling dsDNA into and through the RuvAB complex. RuvB forms 2 homohexamers on either side of HJ DNA bound by 1 or 2 RuvA tetramers; 4 subunits per hexamer contact DNA at a time. Coordinated motions by a converter formed by DNA-disengaged RuvB subunits stimulates ATP hydrolysis and nucleotide exchange. Immobilization of the converter enables RuvB to convert the ATP-contained energy into a lever motion, pulling 2 nucleotides of DNA out of the RuvA tetramer per ATP hydrolyzed, thus driving DNA branch migration. The RuvB motors rotate together with the DNA substrate, which together with the progressing nucleotide cycle form the mechanistic basis for DNA recombination by continuous HJ branch migration. Branch migration allows RuvC to scan DNA until it finds its consensus sequence, where it cleaves and resolves cruciform DNA. This chain is Holliday junction branch migration complex subunit RuvB, found in Ralstonia nicotianae (strain ATCC BAA-1114 / GMI1000) (Ralstonia solanacearum).